The sequence spans 161 residues: Alpha-crystallin A chain (161 aa).

Positions 1–51 are required for complex formation with BFSP1 and BFSP2; the sequence is ALGPFYPSRXXXXXXXXXXXXXXXXXXXXXXXXXXXXQSLFRTVLDSGISE. Q38 carries the deamidated glutamine; partial modification. In terms of domain architecture, sHSP spans 40-150; the sequence is LFRTVLDSGI…SHSERAIPVS (111 aa). N6-acetyllysine is present on K87. A Zn(2+)-binding site is contributed by H88. Deamidated asparagine; partial is present on N89. Zn(2+) is bound by residues E90 and H95. The residue at position 110 (S110) is a Phosphoserine. A Deamidated asparagine; partial modification is found at N111. C119 and C130 form a disulfide bridge. Q135 bears the Deamidated glutamine; partial mark. Residues 140–161 are disordered; sequence ASHSERAIPVSREEKPSSAPSS. The segment covering 141–155 has biased composition (basic and acidic residues); sequence SHSERAIPVSREEKP. H142 is a Zn(2+) binding site. Residue S150 is glycosylated (O-linked (GlcNAc) serine).

It belongs to the small heat shock protein (HSP20) family. As to quaternary structure, heteromer composed of three CRYAA and one CRYAB subunits. Inter-subunit bridging via zinc ions enhances stability, which is crucial as there is no protein turn over in the lens. Can also form homodimers and homotetramers (dimers of dimers) which serve as the building blocks of homooligomers. Within homooligomers, the zinc-binding motif is created from residues of 3 different molecules. His-88 and Glu-90 from one molecule are ligands of the zinc ion, and His-95 and His-142 residues from additional molecules complete the site with tetrahedral coordination geometry. Part of a complex required for lens intermediate filament formation composed of BFSP1, BFSP2 and CRYAA. In terms of processing, undergoes age-dependent proteolytical cleavage at the C-terminus.

It localises to the cytoplasm. The protein resides in the nucleus. Its function is as follows. Contributes to the transparency and refractive index of the lens. In its oxidized form (absence of intramolecular disulfide bond), acts as a chaperone, preventing aggregation of various proteins under a wide range of stress conditions. Required for the correct formation of lens intermediate filaments as part of a complex composed of BFSP1, BFSP2 and CRYAA. This is Alpha-crystallin A chain (CRYAA) from Galegeeska rufescens (East African rufous sengi).